Consider the following 446-residue polypeptide: Exodeoxyribonuclease 7 large subunit (446 aa).

The protein belongs to the XseA family. As to quaternary structure, heterooligomer composed of large and small subunits.

It is found in the cytoplasm. It carries out the reaction Exonucleolytic cleavage in either 5'- to 3'- or 3'- to 5'-direction to yield nucleoside 5'-phosphates.. In terms of biological role, bidirectionally degrades single-stranded DNA into large acid-insoluble oligonucleotides, which are then degraded further into small acid-soluble oligonucleotides. This Streptococcus thermophilus (strain ATCC BAA-250 / LMG 18311) protein is Exodeoxyribonuclease 7 large subunit.